Here is a 148-residue protein sequence, read N- to C-terminus: Single-stranded DNA-binding protein 2 (148 aa).

Residues 4–109 (INSVIIAGNL…IKARRIQFLN (106 aa)) form the SSB domain.

As to quaternary structure, homotetramer.

This is Single-stranded DNA-binding protein 2 (ssb2) from Chlorobaculum tepidum (strain ATCC 49652 / DSM 12025 / NBRC 103806 / TLS) (Chlorobium tepidum).